The following is a 212-amino-acid chain: ATP-dependent dethiobiotin synthetase BioD (212 aa).

An ATP-binding site is contributed by 13 to 18; it reads GIGKTV. Thr17 is a binding site for Mg(2+). Lys33 is an active-site residue. Substrate is bound at residue Ser37. Glu100 contributes to the Mg(2+) binding site. Residues 100–103 and 184–186 each bind ATP; these read EGAG and PRL.

The protein belongs to the dethiobiotin synthetase family. In terms of assembly, homodimer. Requires Mg(2+) as cofactor.

It localises to the cytoplasm. The catalysed reaction is (7R,8S)-7,8-diammoniononanoate + CO2 + ATP = (4R,5S)-dethiobiotin + ADP + phosphate + 3 H(+). It functions in the pathway cofactor biosynthesis; biotin biosynthesis; biotin from 7,8-diaminononanoate: step 1/2. In terms of biological role, catalyzes a mechanistically unusual reaction, the ATP-dependent insertion of CO2 between the N7 and N8 nitrogen atoms of 7,8-diaminopelargonic acid (DAPA, also called 7,8-diammoniononanoate) to form a ureido ring. In Rhodopseudomonas palustris (strain ATCC BAA-98 / CGA009), this protein is ATP-dependent dethiobiotin synthetase BioD.